The chain runs to 235 residues: Maximins-S type A (235 aa).

The signal sequence occupies residues 1 to 18; it reads MNFNYFILVLFFITSGHA. 2 propeptides span residues 19 to 35 and 52 to 65; these read KSET…HIKR and SAEE…LVKR. The residue at position 83 (asparagine 83) is an Asparagine amide. A propeptide spanning residues 87-100 is cleaved from the precursor; the sequence is SAEEQDLAEDLVTR. The residue at position 118 (asparagine 118) is an Asparagine amide. Positions 122–135 are excised as a propeptide; it reads SAEEQDLAEDLVKR. The residue at position 153 (asparagine 153) is an Asparagine amide. Residues 157-170 constitute a propeptide that is removed on maturation; it reads SAEEQDLAEDLVTR. Lysine 188 carries the post-translational modification Lysine amide. Residues 192–205 constitute a propeptide that is removed on maturation; it reads SAEDQDLAEDLVTR. Lysine 223 is modified (lysine amide). A propeptide spanning residues 227-235 is cleaved from the precursor; that stretch reads SAEQEKDMK.

The protein belongs to the maximin-S family. Expressed by the skin dorsal glands.

The protein resides in the secreted. Functionally, maximin-S1 has no antimicrobial activity. Has no hemolytic activity. Maximin-S2 has an activity against mycoplasma but has no activity against common Gram-positive and Gram-negative bacteria nor fungi. Has no hemolytic activity. Its function is as follows. Maximin-S3 has an activity against mycoplasma but has no activity against common Gram-positive and Gram-negative bacteria nor fungi. Has no hemolytic activity. In terms of biological role, maximin-S4 has an activity against mycoplasma but has no activity against common Gram-positive and Gram-negative bacteria nor fungi. Has no hemolytic activity. Functionally, maximin-S5 has an activity against mycoplasma but has no activity against common Gram-positive and Gram-negative bacteria nor fungi. Has no hemolytic activity. The polypeptide is Maximins-S type A (Bombina maxima (Giant fire-bellied toad)).